We begin with the raw amino-acid sequence, 152 residues long: Large ribosomal subunit protein bL9 (152 aa).

The protein belongs to the bacterial ribosomal protein bL9 family.

Binds to the 23S rRNA. This Coxiella burnetii (strain Dugway 5J108-111) protein is Large ribosomal subunit protein bL9.